We begin with the raw amino-acid sequence, 130 residues long: ATP synthase epsilon chain (130 aa).

This sequence belongs to the ATPase epsilon chain family. As to quaternary structure, F-type ATPases have 2 components, CF(1) - the catalytic core - and CF(0) - the membrane proton channel. CF(1) has five subunits: alpha(3), beta(3), gamma(1), delta(1), epsilon(1). CF(0) has three main subunits: a, b and c.

The protein localises to the cell inner membrane. Its function is as follows. Produces ATP from ADP in the presence of a proton gradient across the membrane. This is ATP synthase epsilon chain (atpC) from Fuscovulum blasticum (Rhodobacter blasticus).